The chain runs to 328 residues: Delta-aminolevulinic acid dehydratase (328 aa).

Lysine 200 serves as the catalytic Schiff-base intermediate with substrate. Residues arginine 210 and lysine 222 each contribute to the 5-aminolevulinate site. Mg(2+) is bound at residue glutamate 238. Catalysis depends on lysine 253, which acts as the Schiff-base intermediate with substrate. 5-aminolevulinate is bound by residues serine 279 and tyrosine 318.

The protein belongs to the ALAD family. Homooctamer.

It carries out the reaction 2 5-aminolevulinate = porphobilinogen + 2 H2O + H(+). It functions in the pathway porphyrin-containing compound metabolism; protoporphyrin-IX biosynthesis; coproporphyrinogen-III from 5-aminolevulinate: step 1/4. Its activity is regulated as follows. Stimulated by magnesium, inhibited by zinc. Functionally, catalyzes an early step in the biosynthesis of tetrapyrroles. Binds two molecules of 5-aminolevulinate per subunit, each at a distinct site, and catalyzes their condensation to form porphobilinogen. This Chlorobaculum tepidum (strain ATCC 49652 / DSM 12025 / NBRC 103806 / TLS) (Chlorobium tepidum) protein is Delta-aminolevulinic acid dehydratase (hemB).